The primary structure comprises 460 residues: Ammonium transporter Rh type C (460 aa).

Topologically, residues 1–9 (MAWNTNLRW) are cytoplasmic. The helical transmembrane segment at 10 to 30 (RLPLTCLLLQVIMVILFGVFV) threads the bilayer. Residues 31–61 (RYDPDADAHWIDERLGRNISSDMDNEFYYRY) lie on the Extracellular side of the membrane. N-linked (GlcNAc...) asparagine glycosylation occurs at N48. The helical transmembrane segment at 62–82 (PSFQDVHVMIFVGFGFLMTFL) threads the bilayer. Residues 83 to 86 (QRYG) lie on the Cytoplasmic side of the membrane. The chain crosses the membrane as a helical span at residues 87-107 (FSSVGFNFLLAAFGIQWALLM). The Extracellular segment spans residues 108 to 125 (QGWLHSFHSGYIVLGVEN). A helical membrane pass occupies residues 126-145 (LINADFCVGSVCVAFGAVLG). Residues 146–151 (KVSPVQ) are Cytoplasmic-facing. Residues 152–174 (LLIMTLFQVTLFSVNEFILLNLL) form a helical membrane-spanning segment. The Extracellular portion of the chain corresponds to 175–179 (EVKDA). The chain crosses the membrane as a helical span at residues 180 to 200 (GGSMTIHTFGAYFGLTVTWIL). Topologically, residues 201–219 (YRPNLYQSKERQSSVYHSD) are cytoplasmic. The chain crosses the membrane as a helical span at residues 220 to 240 (LFAMIGTLFLWMYWPSFNSAV). Residues 241–251 (SHHGDAQHRAA) lie on the Extracellular side of the membrane. Residues 252-272 (INTYCSLAACVLTSVALSSAL) traverse the membrane as a helical segment. Over 273–285 (HKKGKLDMVHIQN) the chain is Cytoplasmic. A helical membrane pass occupies residues 286–306 (ATLAGGVAVGTAAEMMLMPYG). Position 307 (S307) is a topological domain, extracellular. A helical transmembrane segment spans residues 308-328 (LIVGFICGIISTLGFVYLTPF). Residues 329–340 (LESRLRIQDTCG) are Cytoplasmic-facing. Residues 341–361 (IHNLHGMPGIIGGIVGAVTAA) form a helical membrane-spanning segment. The Extracellular segment spans residues 362–396 (SANTQQYGQKGLAHAFDIDATKTTWTASMQGSFQA). A helical transmembrane segment spans residues 397 to 417 (AGLFVSLAMALVGGLIVGVIL). At 418–460 (KLPFWGQPADENCFEDAIYWEIPEDQKSLVSRSEDPTLRPTEP) the chain is on the cytoplasmic side.

It belongs to the ammonium transporter (TC 2.A.49) family. Rh subfamily. As to quaternary structure, homotrimer. N-glycosylated.

It is found in the cell membrane. Its subcellular location is the apical cell membrane. The enzyme catalyses NH4(+)(in) = NH4(+)(out). It carries out the reaction methylamine(out) = methylamine(in). The catalysed reaction is CO2(out) = CO2(in). In terms of biological role, ammonium transporter involved in the maintenance of acid-base homeostasis. Transports ammonium and its related derivative methylammonium across the plasma membrane of epithelial cells likely contributing to renal transepithelial ammonia transport and ammonia metabolism. Postulated to primarily mediate an electroneutral bidirectional transport of NH3 ammonia species according to a mechanism that implies interaction of an NH4(+) ion with acidic residues of the pore entry followed by dissociation of NH4(+) into NH3 and H(+). As a result NH3 transits through the central pore and is protonated on the extracellular side reforming NH4(+). May act as a CO2 channel providing for renal acid secretion. This chain is Ammonium transporter Rh type C (RHCG), found in Sus scrofa (Pig).